The following is a 272-amino-acid chain: MGYVVSTFYRFVHLSNYYDIRPVLKEFCVQNNIKGTIILAEQGINATIAGSQNSLDKFFSFLDLDSRLCNLQYHKSFSRCNPFSKMKVKLRKELVCLGIEDFDDSVGGEYIDPENWDNFISRSDVYTIDTRNSYEINFGKFKNSINPETNCFRDFPDWAISWAKNKIDDDPIIAMYCTGGIRCEKSTAFMKDLGFSKVYHLKGGILEYFKSTGNINNLWEGYCFTFDDRIIVDDKLVPGDVKCILCGAHVMLEDMKSISRGHVLCFSCKDHV.

In terms of domain architecture, Rhodanese spans Ser-121–Asn-217. The active-site Cysteine persulfide intermediate is Cys-177.

This sequence belongs to the TrhO family.

It carries out the reaction uridine(34) in tRNA + AH2 + O2 = 5-hydroxyuridine(34) in tRNA + A + H2O. Its function is as follows. Catalyzes oxygen-dependent 5-hydroxyuridine (ho5U) modification at position 34 in tRNAs. The sequence is that of tRNA uridine(34) hydroxylase from Ehrlichia ruminantium (strain Welgevonden).